Here is a 125-residue protein sequence, read N- to C-terminus: MAETSSSSSQTTPETGTYAIVEASGQQFWVQPNRYYDLDRLHADVDAKITLDKVLLVKNGDAATIGKPYVQGASVELKVMAHRRGQKVIVYKMRPKKKTRRKNGHRQELTRVMVESISVGGKAIS.

The protein belongs to the bacterial ribosomal protein bL21 family. As to quaternary structure, part of the 50S ribosomal subunit. Contacts protein L20.

This protein binds to 23S rRNA in the presence of protein L20. This Synechococcus sp. (strain CC9311) protein is Large ribosomal subunit protein bL21.